Reading from the N-terminus, the 335-residue chain is Holliday junction branch migration complex subunit RuvB (335 aa).

The interval 4–184 (VDRIVSANAK…FGIVQRLEFY (181 aa)) is large ATPase domain (RuvB-L). Residues I23, R24, G65, K68, T69, T70, 131-133 (EDY), R174, Y184, and R221 contribute to the ATP site. T69 contacts Mg(2+). The small ATPAse domain (RuvB-S) stretch occupies residues 185-255 (SVEDLASIVT…IAQEALKMLD (71 aa)). A head domain (RuvB-H) region spans residues 258-335 (LAGFDFMDRK…RHFGLEQIEK (78 aa)). DNA is bound by residues R294, R313, and R318.

This sequence belongs to the RuvB family. Homohexamer. Forms an RuvA(8)-RuvB(12)-Holliday junction (HJ) complex. HJ DNA is sandwiched between 2 RuvA tetramers; dsDNA enters through RuvA and exits via RuvB. An RuvB hexamer assembles on each DNA strand where it exits the tetramer. Each RuvB hexamer is contacted by two RuvA subunits (via domain III) on 2 adjacent RuvB subunits; this complex drives branch migration. In the full resolvosome a probable DNA-RuvA(4)-RuvB(12)-RuvC(2) complex forms which resolves the HJ.

The protein resides in the cytoplasm. It carries out the reaction ATP + H2O = ADP + phosphate + H(+). Functionally, the RuvA-RuvB-RuvC complex processes Holliday junction (HJ) DNA during genetic recombination and DNA repair, while the RuvA-RuvB complex plays an important role in the rescue of blocked DNA replication forks via replication fork reversal (RFR). RuvA specifically binds to HJ cruciform DNA, conferring on it an open structure. The RuvB hexamer acts as an ATP-dependent pump, pulling dsDNA into and through the RuvAB complex. RuvB forms 2 homohexamers on either side of HJ DNA bound by 1 or 2 RuvA tetramers; 4 subunits per hexamer contact DNA at a time. Coordinated motions by a converter formed by DNA-disengaged RuvB subunits stimulates ATP hydrolysis and nucleotide exchange. Immobilization of the converter enables RuvB to convert the ATP-contained energy into a lever motion, pulling 2 nucleotides of DNA out of the RuvA tetramer per ATP hydrolyzed, thus driving DNA branch migration. The RuvB motors rotate together with the DNA substrate, which together with the progressing nucleotide cycle form the mechanistic basis for DNA recombination by continuous HJ branch migration. Branch migration allows RuvC to scan DNA until it finds its consensus sequence, where it cleaves and resolves cruciform DNA. The sequence is that of Holliday junction branch migration complex subunit RuvB from Histophilus somni (strain 129Pt) (Haemophilus somnus).